Reading from the N-terminus, the 166-residue chain is Small ribosomal subunit protein uS5 (166 aa).

An S5 DRBM domain is found at 12–75 (YIEKLVQVNR…EAARRNMIQV (64 aa)).

This sequence belongs to the universal ribosomal protein uS5 family. As to quaternary structure, part of the 30S ribosomal subunit. Contacts proteins S4 and S8.

With S4 and S12 plays an important role in translational accuracy. Its function is as follows. Located at the back of the 30S subunit body where it stabilizes the conformation of the head with respect to the body. The sequence is that of Small ribosomal subunit protein uS5 from Azotobacter vinelandii (strain DJ / ATCC BAA-1303).